A 360-amino-acid chain; its full sequence is Protein phosphatase 1L (360 aa).

The Extracellular portion of the chain corresponds to 1–25; it reads MIEDTMTLLSLLGRIMRYFLLRPET. A helical transmembrane segment spans residues 26-42; that stretch reads LFLLCISLALWSYFFHT. The Cytoplasmic segment spans residues 43 to 360; that stretch reads DEVKTIVKSS…FRNSSKTEEQ (318 aa). Residues 92–351 form the PPM-type phosphatase domain; sequence NVAVYSIQGR…DNITVMVVKF (260 aa). Mn(2+) is bound by residues aspartate 128, glycine 129, aspartate 302, and aspartate 342.

It belongs to the PP2C family. As to quaternary structure, interacts with MAP3K7/TAK1 and MAP3K5. Mg(2+) is required as a cofactor. Requires Mn(2+) as cofactor.

It localises to the membrane. The catalysed reaction is O-phospho-L-seryl-[protein] + H2O = L-seryl-[protein] + phosphate. It carries out the reaction O-phospho-L-threonyl-[protein] + H2O = L-threonyl-[protein] + phosphate. In terms of biological role, acts as a suppressor of the SAPK signaling pathways by associating with and dephosphorylating MAP3K7/TAK1 and MAP3K5, and by attenuating the association between MAP3K7/TAK1 and MAP2K4 or MAP2K6. This is Protein phosphatase 1L (PPM1L) from Bos taurus (Bovine).